Here is a 361-residue protein sequence, read N- to C-terminus: Peptide chain release factor 1 (361 aa).

Position 237 is an N5-methylglutamine (glutamine 237). A disordered region spans residues 283–307 (AQQQEQQEQQSSTRKELIGSGDRSQ).

Belongs to the prokaryotic/mitochondrial release factor family. Methylated by PrmC. Methylation increases the termination efficiency of RF1.

The protein resides in the cytoplasm. In terms of biological role, peptide chain release factor 1 directs the termination of translation in response to the peptide chain termination codons UAG and UAA. This chain is Peptide chain release factor 1, found in Vesicomyosocius okutanii subsp. Calyptogena okutanii (strain HA).